A 324-amino-acid chain; its full sequence is Quinolinate synthase 1 (324 aa).

Residues H48 and S66 each coordinate iminosuccinate. Residue C111 coordinates [4Fe-4S] cluster. Iminosuccinate-binding positions include 137–139 (YVN) and S154. Position 196 (C196) interacts with [4Fe-4S] cluster. Iminosuccinate-binding positions include 222 to 224 (HPE) and T239. Residue C282 coordinates [4Fe-4S] cluster.

The protein belongs to the quinolinate synthase family. Type 2 subfamily. It depends on [4Fe-4S] cluster as a cofactor.

It localises to the cytoplasm. It catalyses the reaction iminosuccinate + dihydroxyacetone phosphate = quinolinate + phosphate + 2 H2O + H(+). It participates in cofactor biosynthesis; NAD(+) biosynthesis; quinolinate from iminoaspartate: step 1/1. Catalyzes the condensation of iminoaspartate with dihydroxyacetone phosphate to form quinolinate. The polypeptide is Quinolinate synthase 1 (Mesorhizobium japonicum (strain LMG 29417 / CECT 9101 / MAFF 303099) (Mesorhizobium loti (strain MAFF 303099))).